A 393-amino-acid chain; its full sequence is CAI-1 autoinducer synthase (393 aa).

An N6-(pyridoxal phosphate)lysine modification is found at Lys240.

Belongs to the class-II pyridoxal-phosphate-dependent aminotransferase family. Pyridoxal 5'-phosphate serves as cofactor.

Functionally, required for the synthesis of the quorum-sensing autoinducer CAI-1 ((S)-3-hydroxytridecan-4-one) which probably functions as an intragenus signal. This Vibrio campbellii (strain ATCC BAA-1116) protein is CAI-1 autoinducer synthase (cqsA).